Consider the following 204-residue polypeptide: Peptidyl-prolyl cis-trans isomerase CYP20-1 (204 aa).

The N-terminal stretch at 1 to 23 is a signal peptide; the sequence is MASSVTLLLWSLLLLGTLSAIQA. The PPIase cyclophilin-type domain maps to 38–201; the sequence is YFDVEIDGKA…SKVVIVDSGE (164 aa).

It belongs to the cyclophilin-type PPIase family. Interacts with the PP2A A subunit PP2AA1/RCN1. Ubiquitous, mostly in aerial organs. Higher levels in leaf and buds, and lower levels in seedlings.

The protein resides in the endoplasmic reticulum. Its subcellular location is the secreted. The catalysed reaction is [protein]-peptidylproline (omega=180) = [protein]-peptidylproline (omega=0). With respect to regulation, binds cyclosporin A (CsA). CsA mediates some of its effects via an inhibitory action on PPIase. Functionally, PPIases accelerate the folding of proteins. It catalyzes the cis-trans isomerization of proline imidic peptide bonds in oligopeptides. Seems to be involved in root development. In Arabidopsis thaliana (Mouse-ear cress), this protein is Peptidyl-prolyl cis-trans isomerase CYP20-1 (CYP20-1).